Reading from the N-terminus, the 921-residue chain is Protein translocase subunit SecA (921 aa).

ATP is bound by residues Gln-86, Gly-104 to Thr-108, and Asp-512. Positions 905, 907, 916, and 917 each coordinate Zn(2+).

Belongs to the SecA family. As to quaternary structure, monomer and homodimer. Part of the essential Sec protein translocation apparatus which comprises SecA, SecYEG and auxiliary proteins SecDF-YajC and YidC. Zn(2+) serves as cofactor.

The protein resides in the cell inner membrane. Its subcellular location is the cytoplasm. It catalyses the reaction ATP + H2O + cellular proteinSide 1 = ADP + phosphate + cellular proteinSide 2.. Functionally, part of the Sec protein translocase complex. Interacts with the SecYEG preprotein conducting channel. Has a central role in coupling the hydrolysis of ATP to the transfer of proteins into and across the cell membrane, serving both as a receptor for the preprotein-SecB complex and as an ATP-driven molecular motor driving the stepwise translocation of polypeptide chains across the membrane. The sequence is that of Protein translocase subunit SecA from Caulobacter sp. (strain K31).